The following is a 188-amino-acid chain: Pyridoxal 5'-phosphate synthase subunit PdxT (188 aa).

46-48 serves as a coordination point for L-glutamine; that stretch reads GES. Catalysis depends on Cys78, which acts as the Nucleophile. Residues Arg105 and 134-135 each bind L-glutamine; that span reads IR. Residues His170 and Glu172 each act as charge relay system in the active site.

It belongs to the glutaminase PdxT/SNO family. In the presence of PdxS, forms a dodecamer of heterodimers. Only shows activity in the heterodimer.

The catalysed reaction is aldehydo-D-ribose 5-phosphate + D-glyceraldehyde 3-phosphate + L-glutamine = pyridoxal 5'-phosphate + L-glutamate + phosphate + 3 H2O + H(+). It catalyses the reaction L-glutamine + H2O = L-glutamate + NH4(+). Its pathway is cofactor biosynthesis; pyridoxal 5'-phosphate biosynthesis. Functionally, catalyzes the hydrolysis of glutamine to glutamate and ammonia as part of the biosynthesis of pyridoxal 5'-phosphate. The resulting ammonia molecule is channeled to the active site of PdxS. The protein is Pyridoxal 5'-phosphate synthase subunit PdxT of Moorella thermoacetica (strain ATCC 39073 / JCM 9320).